The primary structure comprises 277 residues: Large ribosomal subunit protein uL2 (277 aa).

Residues 219–277 (RPQTRGSAMNPVDHPHGGGEGKKNSGRHPVTPWGKPTKGAKTRRKKASDKLIISRRKGK) are disordered. Basic and acidic residues predominate over residues 231–241 (DHPHGGGEGKK). Over residues 256–277 (KGAKTRRKKASDKLIISRRKGK) the composition is skewed to basic residues.

It belongs to the universal ribosomal protein uL2 family. As to quaternary structure, part of the 50S ribosomal subunit. Forms a bridge to the 30S subunit in the 70S ribosome.

Its function is as follows. One of the primary rRNA binding proteins. Required for association of the 30S and 50S subunits to form the 70S ribosome, for tRNA binding and peptide bond formation. It has been suggested to have peptidyltransferase activity; this is somewhat controversial. Makes several contacts with the 16S rRNA in the 70S ribosome. The polypeptide is Large ribosomal subunit protein uL2 (Campylobacter curvus (strain 525.92)).